The primary structure comprises 315 residues: Protoheme IX farnesyltransferase 1 (315 aa).

Transmembrane regions (helical) follow at residues 25-45 (PGIIFGNLISVAGGFLLAAKG), 49-69 (LALMLASLVGLSLVVASGCAV), 87-107 (RVTVTGEIAVGNVLAFGLALG), 120-139 (ALALLFAVIGYIVYVGVYSL), 145-165 (SVYGTLVGSFSGAVPPVVGYC), 176-196 (AILLLMFSLWQMPHSYAIAIF), 220-240 (LHIVLYIAVFALVSALLPLAG), 242-262 (TGIAFMAVTCATSLWWLAMAL), and 280-300 (GFSIITIMALSITMALDSQVI).

Belongs to the UbiA prenyltransferase family. Protoheme IX farnesyltransferase subfamily.

The protein localises to the cell inner membrane. The enzyme catalyses heme b + (2E,6E)-farnesyl diphosphate + H2O = Fe(II)-heme o + diphosphate. Its pathway is porphyrin-containing compound metabolism; heme O biosynthesis; heme O from protoheme: step 1/1. Converts heme B (protoheme IX) to heme O by substitution of the vinyl group on carbon 2 of heme B porphyrin ring with a hydroxyethyl farnesyl side group. This chain is Protoheme IX farnesyltransferase 1, found in Shewanella sp. (strain W3-18-1).